The chain runs to 351 residues: Peptide chain release factor 1 (351 aa).

The residue at position 229 (glutamine 229) is an N5-methylglutamine.

It belongs to the prokaryotic/mitochondrial release factor family. In terms of processing, methylated by PrmC. Methylation increases the termination efficiency of RF1.

Its subcellular location is the cytoplasm. Functionally, peptide chain release factor 1 directs the termination of translation in response to the peptide chain termination codons UAG and UAA. The polypeptide is Peptide chain release factor 1 (Cereibacter sphaeroides (strain ATCC 17025 / ATH 2.4.3) (Rhodobacter sphaeroides)).